We begin with the raw amino-acid sequence, 792 residues long: Molybdenum cofactor sulfurase (792 aa).

Lysine 246 is modified (N6-(pyridoxal phosphate)lysine). The active site involves cysteine 414. The MOSC domain maps to 646-792 (LRLLRQSSQR…LTCGDVVVVT (147 aa)). Position 748 is a phosphoserine (serine 748).

The protein belongs to the class-V pyridoxal-phosphate-dependent aminotransferase family. MOCOS subfamily. Pyridoxal 5'-phosphate serves as cofactor.

The catalysed reaction is Mo-molybdopterin + L-cysteine + AH2 = thio-Mo-molybdopterin + L-alanine + A + H2O. Its pathway is cofactor biosynthesis; molybdopterin biosynthesis. Its function is as follows. Sulfurates the molybdenum cofactor. Sulfation of molybdenum is essential for xanthine dehydrogenase (XDH) and aldehyde oxidase (ADO) enzymes in which molybdenum cofactor is liganded by 1 oxygen and 1 sulfur atom in active form. The polypeptide is Molybdenum cofactor sulfurase (Drosophila pseudoobscura pseudoobscura (Fruit fly)).